The chain runs to 90 residues: Mitochondrial import inner membrane translocase subunit Tim9 (90 aa).

The short motif at 24 to 48 (CFNSCVNEFGSRTVSGKEESCANNC) is the Twin CX3C motif element. Disulfide bonds link cysteine 24–cysteine 48 and cysteine 28–cysteine 44.

Belongs to the small Tim family. Heterohexamer; composed of 3 copies of tim-9/tin-9.1 and 3 copies of tim-10/tin-10, named soluble 70 kDa complex. The complex associates with the tim-22 component of the TIM22 complex. Interacts with multi-pass transmembrane proteins in transit.

It localises to the mitochondrion inner membrane. Its function is as follows. Mitochondrial intermembrane chaperone that participates in the import and insertion of multi-pass transmembrane proteins into the mitochondrial inner membrane. May also be required for the transfer of beta-barrel precursors from the TOM complex to the sorting and assembly machinery (SAM complex) of the outer membrane. Acts as a chaperone-like protein that protects the hydrophobic precursors from aggregation and guide them through the mitochondrial intermembrane space. This chain is Mitochondrial import inner membrane translocase subunit Tim9 (tin-9.1), found in Caenorhabditis elegans.